The chain runs to 1034 residues: Putative beta-glucuronidase (1034 aa).

E432 functions as the Proton donor in the catalytic mechanism. The region spanning 909 to 1034 is the CBM6 domain; it reads VDISAEEGVL…GPFIDELFID (126 aa).

The protein belongs to the glycosyl hydrolase 2 family.

It is found in the cytoplasm. The enzyme catalyses a beta-D-glucuronoside + H2O = D-glucuronate + an alcohol. Its function is as follows. Glycoside hydrolase that may be involved in ulvan degradation. Ulvan is the main polysaccharide component of the Ulvales (green seaweed) cell wall. It is composed of disaccharide building blocks comprising 3-sulfated rhamnose (Rha3S) linked to D-glucuronic acid (GlcA), L-iduronic acid (IduA), or D-xylose (Xyl). The protein is Putative beta-glucuronidase of Formosa agariphila (strain DSM 15362 / KCTC 12365 / LMG 23005 / KMM 3901 / M-2Alg 35-1).